The primary structure comprises 136 residues: Basic phospholipase A2 Tgc-K49 (136 aa).

Positions 1-15 (MRTLWIVAVLLVGEG) are cleaved as a signal peptide. 7 disulfide bridges follow: Cys-41–Cys-130, Cys-43–Cys-59, Cys-58–Cys-110, Cys-64–Cys-136, Cys-65–Cys-103, Cys-72–Cys-96, and Cys-90–Cys-101. His-62 is an active-site residue. Asp-104 is a catalytic residue.

The protein belongs to the phospholipase A2 family. Group II subfamily. K49 sub-subfamily. As to expression, expressed by the venom gland.

The protein localises to the secreted. It carries out the reaction a 1,2-diacyl-sn-glycero-3-phosphocholine + H2O = a 1-acyl-sn-glycero-3-phosphocholine + a fatty acid + H(+). PLA2 catalyzes the calcium-dependent hydrolysis of the 2-acyl groups in 3-sn-phosphoglycerides. This Trimeresurus gracilis (Kikuchi habu) protein is Basic phospholipase A2 Tgc-K49.